Consider the following 159-residue polypeptide: Ecotin (159 aa).

The signal sequence occupies residues 1 to 22 (MRPTPMTAILALSLAAAAPAMA). Cysteine 68 and cysteine 105 are oxidised to a cystine.

It belongs to the protease inhibitor I11 (ecotin) family. As to quaternary structure, homodimer.

It is found in the periplasm. In terms of biological role, general inhibitor of family S1 serine proteases. This Pseudomonas putida (strain ATCC 700007 / DSM 6899 / JCM 31910 / BCRC 17059 / LMG 24140 / F1) protein is Ecotin.